The sequence spans 87 residues: Small ribosomal subunit protein bS20 (87 aa).

Residues 1 to 24 (MANTAQARKRARQSVERNKHNSSL) form a disordered region.

This sequence belongs to the bacterial ribosomal protein bS20 family.

Binds directly to 16S ribosomal RNA. The protein is Small ribosomal subunit protein bS20 of Bordetella avium (strain 197N).